Consider the following 423-residue polypeptide: Large ribosomal subunit protein mL37 (423 aa).

The N-terminal 29 residues, 1 to 29 (MALASGPARRVLARPWGLGLEGCGVPRRG), are a transit peptide targeting the mitochondrion.

This sequence belongs to the mitochondrion-specific ribosomal protein mL37 family. Component of the mitochondrial ribosome large subunit (39S) which comprises a 16S rRNA and about 50 distinct proteins.

The protein localises to the mitochondrion. This is Large ribosomal subunit protein mL37 (MRPL37) from Bos taurus (Bovine).